The primary structure comprises 220 residues: Adenylate kinase (220 aa).

10–15 (GAGKGT) contacts ATP. An NMP region spans residues 30 to 59 (STGDMLRAAVKAGTPLGVEAKTYMDEGKLV). Residues Thr-31, Arg-36, 57 to 59 (KLV), 85 to 88 (GFPR), and Gln-92 contribute to the AMP site. Positions 122-159 (GRRTHPASGRTYHVKFNPPKVEGKDDVTGEPLVQRDDD) are LID. Residues Arg-123 and 132-133 (TY) each bind ATP. AMP contacts are provided by Arg-156 and Arg-167. An ATP-binding site is contributed by Gly-206.

Belongs to the adenylate kinase family. Monomer.

The protein localises to the cytoplasm. It carries out the reaction AMP + ATP = 2 ADP. Its pathway is purine metabolism; AMP biosynthesis via salvage pathway; AMP from ADP: step 1/1. In terms of biological role, catalyzes the reversible transfer of the terminal phosphate group between ATP and AMP. Plays an important role in cellular energy homeostasis and in adenine nucleotide metabolism. This is Adenylate kinase from Burkholderia mallei (strain NCTC 10247).